The chain runs to 549 residues: Siroheme synthase (549 aa).

The segment at 1 to 203 (MNTFPLFFKL…GNENEALAQL (203 aa)) is precorrin-2 dehydrogenase /sirohydrochlorin ferrochelatase. Residues 22–23 (DV) and 43–44 (PS) each bind NAD(+). S128 carries the phosphoserine modification. Positions 247-549 (GEVYIVGAGP…DGDLEQLIIG (303 aa)) are uroporphyrinogen-III C-methyltransferase. Residue P256 participates in S-adenosyl-L-methionine binding. D279 (proton acceptor) is an active-site residue. Catalysis depends on K301, which acts as the Proton donor. Residues 332 to 334 (GGD), I337, 362 to 363 (TA), M414, and A443 each bind S-adenosyl-L-methionine.

In the N-terminal section; belongs to the precorrin-2 dehydrogenase / sirohydrochlorin ferrochelatase family. This sequence in the C-terminal section; belongs to the precorrin methyltransferase family.

The catalysed reaction is uroporphyrinogen III + 2 S-adenosyl-L-methionine = precorrin-2 + 2 S-adenosyl-L-homocysteine + H(+). It carries out the reaction precorrin-2 + NAD(+) = sirohydrochlorin + NADH + 2 H(+). The enzyme catalyses siroheme + 2 H(+) = sirohydrochlorin + Fe(2+). The protein operates within cofactor biosynthesis; adenosylcobalamin biosynthesis; precorrin-2 from uroporphyrinogen III: step 1/1. It functions in the pathway cofactor biosynthesis; adenosylcobalamin biosynthesis; sirohydrochlorin from precorrin-2: step 1/1. It participates in porphyrin-containing compound metabolism; siroheme biosynthesis; precorrin-2 from uroporphyrinogen III: step 1/1. Its pathway is porphyrin-containing compound metabolism; siroheme biosynthesis; siroheme from sirohydrochlorin: step 1/1. The protein operates within porphyrin-containing compound metabolism; siroheme biosynthesis; sirohydrochlorin from precorrin-2: step 1/1. Multifunctional enzyme that catalyzes the SAM-dependent methylations of uroporphyrinogen III at position C-2 and C-7 to form precorrin-2 via precorrin-1. Then it catalyzes the NAD-dependent ring dehydrogenation of precorrin-2 to yield sirohydrochlorin. Finally, it catalyzes the ferrochelation of sirohydrochlorin to yield siroheme. In Psychrobacter arcticus (strain DSM 17307 / VKM B-2377 / 273-4), this protein is Siroheme synthase.